The primary structure comprises 196 residues: C-type lectin domain family 2 member F (196 aa).

Residues 1–21 are disordered; sequence MNAQCLKKPEEGESSPGTGDK. Residues 1–41 are Cytoplasmic-facing; it reads MNAQCLKKPEEGESSPGTGDKILQRNSLRAISPESSAKLYC. The helical; Signal-anchor for type II membrane protein transmembrane segment at 42-62 threads the bilayer; the sequence is CCGVIMVLTVAVVALSVALPA. The Extracellular portion of the chain corresponds to 63–196; the sequence is TKTEQILINK…SRSSNYMLQC (134 aa). Cysteines 77 and 88 form a disulfide. One can recognise a C-type lectin domain in the interval 84–187; that stretch reads VGNKCFYFSE…DYIPRKWICS (104 aa). Asn-97 carries an N-linked (GlcNAc...) asparagine glycan. A disulfide bridge connects residues Cys-105 and Cys-186.

The protein resides in the cell membrane. Its function is as follows. Lectin-type cell surface receptor. This is C-type lectin domain family 2 member F (Clec2f) from Mus musculus (Mouse).